Reading from the N-terminus, the 222-residue chain is GMP/IMP nucleotidase YrfG (222 aa).

Aspartate 9 functions as the Nucleophile in the catalytic mechanism. The Mg(2+) site is built by aspartate 9 and aspartate 11. Residues 9-11 and lysine 149 contribute to the substrate site; that span reads DVD. A Mg(2+)-binding site is contributed by aspartate 174.

It belongs to the HAD-like hydrolase superfamily. Mg(2+) is required as a cofactor. It depends on Mn(2+) as a cofactor. Co(2+) serves as cofactor. Requires Zn(2+) as cofactor.

It carries out the reaction a ribonucleoside 5'-phosphate + H2O = a ribonucleoside + phosphate. Catalyzes the dephosphorylation of different purine nucleotides (GMP and IMP). Also hydrolyzes flavin mononucleotide (FMN). The polypeptide is GMP/IMP nucleotidase YrfG (yrfG) (Escherichia coli (strain K12)).